Consider the following 240-residue polypeptide: MFRRKLQALDYHNPAGFNFKDETEFRNFLVWLEDQKIRHYKIEERGNLRNIHSSEWPAQYEKYLNDVNCPFKVQERQESIDWLLGLAVRLEYGDNAAKYQNAKPYNSDVSKSAEPLINLDVNNPDFKAGVMALANLLQIQRHDDYLMMLKAIRILVQERLSQEAVAKSNSAKEGLPVALDKHILGFDTGDAVLNDAARILRLLHIEELRELQTKINEAIVAVQAIIADPKTDHRLGKVGR.

This sequence belongs to the RTRAF family. As to quaternary structure, homodimer. Component of a tRNA-splicing ligase complex.

Its subcellular location is the nucleus. It localises to the cytoplasm. It is found in the cytosol. The protein resides in the perinuclear region. The protein localises to the cytoskeleton. Its subcellular location is the microtubule organizing center. It localises to the centrosome. Its function is as follows. RNA-binding protein involved in modulation of mRNA transcription by Polymerase II. Component of the tRNA-splicing ligase complex. This is RNA transcription, translation and transport factor protein from Xenopus laevis (African clawed frog).